The primary structure comprises 214 residues: 7-cyano-7-deazaguanine synthase (214 aa).

10–20 is an ATP binding site; the sequence is FSGGQDSTTCL. Residues cysteine 184, cysteine 193, cysteine 196, and cysteine 199 each contribute to the Zn(2+) site.

The protein belongs to the QueC family. Homodimer. Zn(2+) is required as a cofactor.

The enzyme catalyses 7-carboxy-7-deazaguanine + NH4(+) + ATP = 7-cyano-7-deazaguanine + ADP + phosphate + H2O + H(+). The protein operates within purine metabolism; 7-cyano-7-deazaguanine biosynthesis. Its function is as follows. Catalyzes the ATP-dependent conversion of 7-carboxy-7-deazaguanine (CDG) to 7-cyano-7-deazaguanine (preQ(0)). This Exiguobacterium sp. (strain ATCC BAA-1283 / AT1b) protein is 7-cyano-7-deazaguanine synthase.